The primary structure comprises 352 residues: Small ribosomal subunit biogenesis GTPase RsgA (352 aa).

Residues 109-277 (DTVLKRPDMY…LIDSPGIREF (169 aa)) enclose the CP-type G domain. GTP contacts are provided by residues 165–168 (NKAD) and 219–227 (GQSGVGKSS). Zn(2+) is bound by residues cysteine 301, cysteine 306, histidine 308, and cysteine 314.

The protein belongs to the TRAFAC class YlqF/YawG GTPase family. RsgA subfamily. Monomer. Associates with 30S ribosomal subunit, binds 16S rRNA. Requires Zn(2+) as cofactor.

It is found in the cytoplasm. In terms of biological role, one of several proteins that assist in the late maturation steps of the functional core of the 30S ribosomal subunit. Helps release RbfA from mature subunits. May play a role in the assembly of ribosomal proteins into the subunit. Circularly permuted GTPase that catalyzes slow GTP hydrolysis, GTPase activity is stimulated by the 30S ribosomal subunit. The sequence is that of Small ribosomal subunit biogenesis GTPase RsgA from Alcanivorax borkumensis (strain ATCC 700651 / DSM 11573 / NCIMB 13689 / SK2).